The following is a 307-amino-acid chain: MRSLIVVLGPTAVGKTKVAIFLAKYFQSPIISVDSRQLYKELPIGTAAPSIVELNQVKHYFVASLSVTDYYNASKFEKEAIALISNLHQKYQTIIACGGSMLYLDALCRGIDEIPTIDPKLRMNILSVYRKEGIDSILRQLRTHDPTFYNLVDLKNHKRVIHALEICLMTGKPYSQLRCGNVKKRSFNIIKIGLNRERQELYNRISIRVDKMIENGLLEEARRVYPYHHFNSLNTVGYKELFQFFDGKYTLDFAIEKIKRNTRIYSRKQIAWFKKDKEINWFYPNNIDEFETSCLLDTISHKSILLT.

Position 9 to 16 (9 to 16 (GPTAVGKT)) interacts with ATP. 11–16 (TAVGKT) is a binding site for substrate. The segment at 34-37 (DSRQ) is interaction with substrate tRNA.

The protein belongs to the IPP transferase family. Monomer. It depends on Mg(2+) as a cofactor.

It catalyses the reaction adenosine(37) in tRNA + dimethylallyl diphosphate = N(6)-dimethylallyladenosine(37) in tRNA + diphosphate. Catalyzes the transfer of a dimethylallyl group onto the adenine at position 37 in tRNAs that read codons beginning with uridine, leading to the formation of N6-(dimethylallyl)adenosine (i(6)A). The sequence is that of tRNA dimethylallyltransferase 2 from Azobacteroides pseudotrichonymphae genomovar. CFP2.